The sequence spans 314 residues: Aspartate carbamoyltransferase catalytic subunit (314 aa).

Positions 55 and 56 each coordinate carbamoyl phosphate. Lys-83 serves as a coordination point for L-aspartate. 3 residues coordinate carbamoyl phosphate: Arg-105, His-139, and Gln-142. L-aspartate contacts are provided by Arg-172 and Arg-226. The carbamoyl phosphate site is built by Gly-267 and Pro-268.

Belongs to the aspartate/ornithine carbamoyltransferase superfamily. ATCase family. As to quaternary structure, heterododecamer (2C3:3R2) of six catalytic PyrB chains organized as two trimers (C3), and six regulatory PyrI chains organized as three dimers (R2).

The enzyme catalyses carbamoyl phosphate + L-aspartate = N-carbamoyl-L-aspartate + phosphate + H(+). It functions in the pathway pyrimidine metabolism; UMP biosynthesis via de novo pathway; (S)-dihydroorotate from bicarbonate: step 2/3. Functionally, catalyzes the condensation of carbamoyl phosphate and aspartate to form carbamoyl aspartate and inorganic phosphate, the committed step in the de novo pyrimidine nucleotide biosynthesis pathway. This Rhodococcus jostii (strain RHA1) protein is Aspartate carbamoyltransferase catalytic subunit.